We begin with the raw amino-acid sequence, 181 residues long: ATP synthase subunit delta (181 aa).

The protein belongs to the ATPase delta chain family. In terms of assembly, F-type ATPases have 2 components, F(1) - the catalytic core - and F(0) - the membrane proton channel. F(1) has five subunits: alpha(3), beta(3), gamma(1), delta(1), epsilon(1). F(0) has three main subunits: a(1), b(2) and c(10-14). The alpha and beta chains form an alternating ring which encloses part of the gamma chain. F(1) is attached to F(0) by a central stalk formed by the gamma and epsilon chains, while a peripheral stalk is formed by the delta and b chains.

The protein localises to the cell inner membrane. Functionally, f(1)F(0) ATP synthase produces ATP from ADP in the presence of a proton or sodium gradient. F-type ATPases consist of two structural domains, F(1) containing the extramembraneous catalytic core and F(0) containing the membrane proton channel, linked together by a central stalk and a peripheral stalk. During catalysis, ATP synthesis in the catalytic domain of F(1) is coupled via a rotary mechanism of the central stalk subunits to proton translocation. Its function is as follows. This protein is part of the stalk that links CF(0) to CF(1). It either transmits conformational changes from CF(0) to CF(1) or is implicated in proton conduction. The protein is ATP synthase subunit delta of Blochmanniella pennsylvanica (strain BPEN).